We begin with the raw amino-acid sequence, 295 residues long: MSPSAANTPSYDDFALALEAQSLDSQKGQLVRGKVCEYSTDGAYIDIGGKAPAFLPKREAALHAVLDLEAHLPKDEELEFLVIRDQNEDGQVTVSLRALALEQAWTRVAELQEGGQTVQVKVTGSNKGGVTADLEGLRAFIPRSHLNEKEDLDSLKGKTLTVAFLEVNRADKKLVLSERQAARTALVREIEVGQLINGKVTGLKPFGVFVDLGGATALLPINQISQKFVADVGAIFKIGDPIQALVVAIDNTKGRISLSTKVLENHPGEILENVAELQASAADRAERARKQLESQ.

3 consecutive S1 motif domains span residues 28-97 (GQLV…VSLR), 115-179 (GQTV…LSER), and 193-261 (GQLI…LSTK).

It belongs to the bacterial ribosomal protein bS1 family.

Functionally, binds mRNA. The polypeptide is Small ribosomal subunit protein bS1 (rpsA) (Synechococcus elongatus (strain ATCC 33912 / PCC 7942 / FACHB-805) (Anacystis nidulans R2)).